Here is a 69-residue protein sequence, read N- to C-terminus: Large ribosomal subunit protein bL28 (69 aa).

The disordered stretch occupies residues 1 to 27; sequence MSRRCSVSGKGPLVGNNVSHANNKTKR.

Belongs to the bacterial ribosomal protein bL28 family.

The sequence is that of Large ribosomal subunit protein bL28 from Sulfurovum sp. (strain NBC37-1).